The sequence spans 438 residues: Plasmalemma vesicle-associated protein (438 aa).

The Cytoplasmic portion of the chain corresponds to 1 to 26 (MGLSMDRSPYARTGDQQRGCWYYLRY). A helical; Signal-anchor for type II membrane protein membrane pass occupies residues 27 to 47 (FFLFVSLIQFLIILGLVLFMI). Residues 48–438 (YGNVHATTES…VVNPAAQPSG (391 aa)) lie on the Extracellular side of the membrane. 4 N-linked (GlcNAc...) asparagine glycosylation sites follow: Asn82, Asn88, Asn112, and Asn150. Coiled coils occupy residues 140–160 (KQCQ…LFKL), 189–224 (KRQT…QSLC), and 281–383 (EELA…ISAL). The disordered stretch occupies residues 391–413 (SLPAVPPRVSGPPPNPPPIDPAS). The segment covering 394–410 (AVPPRVSGPPPNPPPID) has biased composition (pro residues).

Homodimer. Expressed in lung, kidney, spleen, heart, muscle, eye, pancreas, thyroid, thymus, submaxillary gland, prostate, epididymis, uterus and liver.

The protein resides in the cell membrane. It localises to the membrane. It is found in the caveola. Its subcellular location is the cytoplasm. The protein localises to the perinuclear region. Functionally, endothelial cell-specific membrane protein involved in the formation of the diaphragms that bridge endothelial fenestrae. It is also required for the formation of stomata of caveolae and transendothelial channels. Functions in microvascular permeability, endothelial fenestrae contributing to the passage of water and solutes and regulating transcellular versus paracellular flow in different organs. Plays a specific role in embryonic development. This is Plasmalemma vesicle-associated protein (Plvap) from Mus musculus (Mouse).